The primary structure comprises 378 residues: Poly(3-hydroxyalkanoate) polymerase subunit PhaC (378 aa).

Positions 84–356 (PVLIVYALVN…QSFPVGHIGM (273 aa)) constitute an AB hydrolase-1 domain.

Belongs to the PHA/PHB synthase family. Type III PhaC subfamily. In terms of assembly, forms a heterodimer with PhaE, which may multimerize in the presence of 3-hydroxybutyryl-CoA. Both subunits are required for PHB synthesis in E.coli and in PHA-negative A.eutrophus.

It localises to the cytoplasm. The catalysed reaction is (3R)-3-hydroxybutanoyl-CoA + [(3R)-hydroxybutanoate](n) = [(3R)-hydroxybutanoate](n+1) + CoA. The protein operates within biopolymer metabolism; poly-(R)-3-hydroxybutanoate biosynthesis. In terms of biological role, when expressed in E.coli with Synechocystis PhaE and C.necator PhaA and PhaB, confers the ability to synthesize up to 13% (w/w) poly(3-hydroxybutyrate) (PHB) depending on the carbon source; all 4 genes are necessary for PHB production. Cell-free in vitro coexpression with PhaE gives a heterodimer able to polymerize 3-hydroxybutyrate-CoA. The chain is Poly(3-hydroxyalkanoate) polymerase subunit PhaC from Synechocystis sp. (strain ATCC 27184 / PCC 6803 / Kazusa).